The following is a 311-amino-acid chain: Probable manganese-dependent inorganic pyrophosphatase (311 aa).

Mn(2+) is bound by residues His-9, Asp-13, Asp-15, Asp-77, His-99, and Asp-151.

It belongs to the PPase class C family. Mn(2+) is required as a cofactor.

It localises to the cytoplasm. It catalyses the reaction diphosphate + H2O = 2 phosphate + H(+). The protein is Probable manganese-dependent inorganic pyrophosphatase of Streptococcus pyogenes serotype M1.